The chain runs to 711 residues: Zinc finger CCCH domain-containing protein 43 (711 aa).

Residues 1 to 49 are disordered; sequence MPQDDDWFWGRPTPVVVGDGETTSKPKPPVAGKTKKVEEQHPRRPGEPD. Positions 35–47 are enriched in basic and acidic residues; that stretch reads KKVEEQHPRRPGE. 3 consecutive C3H1-type zinc fingers follow at residues 44–72, 90–118, and 157–185; these read RPGE…HPDP, RPGE…HPPR, and RPGT…HPDP. Residues 384 to 637 enclose the MIF4G domain; that stretch reads LKTLKSILNT…GAISYLIEKE (254 aa).

The sequence is that of Zinc finger CCCH domain-containing protein 43 from Oryza sativa subsp. japonica (Rice).